We begin with the raw amino-acid sequence, 144 residues long: Transcription antitermination protein NusB (144 aa).

The protein belongs to the NusB family.

Functionally, involved in transcription antitermination. Required for transcription of ribosomal RNA (rRNA) genes. Binds specifically to the boxA antiterminator sequence of the ribosomal RNA (rrn) operons. The chain is Transcription antitermination protein NusB from Paraburkholderia phytofirmans (strain DSM 17436 / LMG 22146 / PsJN) (Burkholderia phytofirmans).